A 1338-amino-acid polypeptide reads, in one-letter code: Apoptotic chromatin condensation inducer in the nucleus (1338 aa).

The segment at 1–57 (MWGRKRPNSSGETRGILSGNRGVDYGSGRGQSGPFEGRWRKLPKMPEAVGTDPSTSR) is disordered. The SAP domain occupies 72–106 (LQALRVTDLKAALEQRGLAKSGQKSALVKRLKGAL). Serine 132, serine 166, serine 169, serine 208, serine 210, and serine 216 each carry phosphoserine. Residues 155–866 (EAREAAELEE…ATQKKPSISI (712 aa)) are disordered. Residues 161–171 (ELEEASAESED) are compositionally biased toward acidic residues. Over residues 219-228 (EKPRKGERRS) the composition is skewed to basic and acidic residues. Serine 242 carries the phosphoserine modification. The residue at position 253 (threonine 253) is a Phosphothreonine. A Glycyl lysine isopeptide (Lys-Gly) (interchain with G-Cter in SUMO1) cross-link involves residue lysine 267. Acidic residues predominate over residues 269–290 (EEEEEEEEEEEDDDDEEEEEVD). Serine 295 carries the post-translational modification Phosphoserine. Residues 313-353 (ERTRAKPEKVVDEKPLNIRSQEKGELEKGGRVTRSQEEARR) show a composition bias toward basic and acidic residues. Lysine 318 participates in a covalent cross-link: Glycyl lysine isopeptide (Lys-Gly) (interchain with G-Cter in SUMO2). Phosphoserine occurs at positions 332 and 369. Lysine 378 participates in a covalent cross-link: Glycyl lysine isopeptide (Lys-Gly) (interchain with G-Cter in SUMO2). Serine 387, serine 389, serine 391, and serine 413 each carry phosphoserine. A phosphothreonine mark is found at threonine 417 and threonine 423. Positions 425-434 (EASSPPTHIQ) are enriched in polar residues. 5 positions are modified to phosphoserine: serine 454, serine 477, serine 479, serine 491, and serine 497. The segment covering 506 to 518 (QKSSLPECSTQKG) has biased composition (polar residues). Positions 542–559 (ITEEPMKKQSLEQKEGRR) are enriched in basic and acidic residues. Serine 561 is modified (phosphoserine). Composition is skewed to low complexity over residues 573 to 603 (SADSSSSRSSSPSSSSSPSRSPSPDSVASRP) and 646 to 662 (RSASSSSRKSLSPGVSR). An N6,N6,N6-trimethyllysine; by EHMT2; alternate modification is found at lysine 654. N6,N6-dimethyllysine; by EHMT2; alternate is present on lysine 654. 4 positions are modified to phosphoserine: serine 655, serine 657, serine 710, and serine 729. A Glycyl lysine isopeptide (Lys-Gly) (interchain with G-Cter in SUMO2) cross-link involves residue lysine 732. The segment covering 744–754 (TQPQTSETQIS) has biased composition (polar residues). Composition is skewed to basic and acidic residues over residues 757-767 (LESERTHHTVE) and 798-815 (NDERPEGGAEEEEKKESS). Serine 825 and serine 838 each carry phosphoserine. Polar residues predominate over residues 855–866 (TAATQKKPSISI). Lysine 861 carries the post-translational modification N6-acetyllysine; alternate. Lysine 861 is covalently cross-linked (Glycyl lysine isopeptide (Lys-Gly) (interchain with G-Cter in SUMO2); alternate). Lysine 879 is covalently cross-linked (Glycyl lysine isopeptide (Lys-Gly) (interchain with G-Cter in SUMO2)). Over residues 892-915 (ADDSRISEDETERNGDDGTHDKGL) the composition is skewed to basic and acidic residues. The interval 892–950 (ADDSRISEDETERNGDDGTHDKGLKICRTVTQVVPAEGQENGQREEEEEKEPEAELPAP) is disordered. Phosphoserine is present on residues serine 895 and serine 898. Positions 936 to 945 (EEEEEKEPEA) are enriched in acidic residues. Residue lysine 969 forms a Glycyl lysine isopeptide (Lys-Gly) (interchain with G-Cter in SUMO2) linkage. Threonine 975 is subject to Phosphothreonine. Serine 986, serine 989, and serine 1003 each carry phosphoserine. Glycyl lysine isopeptide (Lys-Gly) (interchain with G-Cter in SUMO2) cross-links involve residues lysine 1046 and lysine 1106. Disordered stretches follow at residues 1104–1214 (ETKA…DDLF) and 1226–1338 (LPLT…GGRR). Residues 1115–1129 (PLHPPPPPPVQPPPH) show a composition bias toward pro residues. The span at 1130 to 1174 (PRAEQREQERAVREQWAEREREMERRERTRSEREWDRDKVREGPR) shows a compositional bias: basic and acidic residues. The span at 1175–1192 (SRSRSRDRRRKERAKSKE) shows a compositional bias: basic residues. Serine 1179 is modified (phosphoserine; by SRPK2 and PKB/AKT1). Composition is skewed to basic and acidic residues over residues 1193-1214 (KKSEKKEKAQEEPPAKLLDDLF) and 1236-1317 (KEAE…DRRD). Positions 1209–1236 (LLDDLFRKTKAAPCIYWLPLTESQIVQK) are sufficient for interaction with RNPS1 and SAP18 and formation of the ASAP complex.

As to quaternary structure, found in a mRNA splicing-dependent exon junction complex (EJC). Component of the heterotrimeric ASAP (apoptosis- and splicing-associated protein) complexes consisting of RNPS1, SAP18 and different isoforms of ACIN1; the association of SAP18 seems to require a preformed RNPS1:ACIN1 complex. Interacts with API5. Interacts with SRPK2 in a phosphorylation-dependent manner. Undergoes proteolytic cleavage; the processed form is active, contrary to the uncleaved form. Post-translationally, phosphorylation on Ser-1179 by SRPK2 up-regulates its stimulatory effect on cyclin A1.

Its subcellular location is the nucleus. It localises to the nucleus speckle. The protein localises to the nucleoplasm. In terms of biological role, auxiliary component of the splicing-dependent multiprotein exon junction complex (EJC) deposited at splice junction on mRNAs. The EJC is a dynamic structure consisting of core proteins and several peripheral nuclear and cytoplasmic associated factors that join the complex only transiently either during EJC assembly or during subsequent mRNA metabolism. Component of the ASAP complexes which bind RNA in a sequence-independent manner and are proposed to be recruited to the EJC prior to or during the splicing process and to regulate specific excision of introns in specific transcription subsets; ACIN1 confers RNA-binding to the complex. The ASAP complex can inhibit RNA processing during in vitro splicing reactions. The ASAP complex promotes apoptosis and is disassembled after induction of apoptosis. Involved in the splicing modulation of BCL2L1/Bcl-X (and probably other apoptotic genes); specifically inhibits formation of proapoptotic isoforms such as Bcl-X(S); the activity is different from the established EJC assembly and function. Induces apoptotic chromatin condensation after activation by CASP3. Regulates cyclin A1, but not cyclin A2, expression in leukemia cells. The sequence is that of Apoptotic chromatin condensation inducer in the nucleus (Acin1) from Mus musculus (Mouse).